A 679-amino-acid chain; its full sequence is Membrane-spanning 4-domains subfamily A member 14 (679 aa).

Helical transmembrane passes span 50 to 70 (ILLA…YIGF), 76 to 96 (LVVL…TGYL), 110 to 130 (VTGM…FTIL), and 141 to 161 (MPSF…LFFL). Disordered regions lie at residues 218-259 (VSQP…EKKP), 331-363 (SEQT…ILSQ), 469-491 (KEWK…LNQQ), and 505-633 (VQAK…QAQV). A compositionally biased stretch (basic and acidic residues) spans 224–234 (KGREFVPDEQK). Residues 337 to 348 (SKSTSSHVKQSS) are compositionally biased toward low complexity. A compositionally biased stretch (basic and acidic residues) spans 469–478 (KEWKSEEELH). Composition is skewed to polar residues over residues 519–535 (DQQS…SLDQ) and 550–563 (KQAQ…QLPD). Positions 580-601 (QSKDGQVKDQQTDKEQNSKKQT) are enriched in basic and acidic residues. Polar residues predominate over residues 619–632 (GQFQNVQAEGQQAQ).

It belongs to the MS4A family.

Its subcellular location is the membrane. Its function is as follows. May be involved in signal transduction as a component of a multimeric receptor complex. The chain is Membrane-spanning 4-domains subfamily A member 14 (MS4A14) from Homo sapiens (Human).